A 609-amino-acid chain; its full sequence is Proteasome-associated ATPase (609 aa).

The interval 1 to 27 (MGSSERSEAFGTPRESDMSSGDEAELE) is disordered. Residues 17–96 (DMSSGDEAEL…LREEVDRLGQ (80 aa)) adopt a coiled-coil conformation. 296–301 (GCGKTL) lines the ATP pocket. The tract at residues 608 to 609 (YL) is docks into pockets in the proteasome alpha-ring.

It belongs to the AAA ATPase family. In terms of assembly, homohexamer. Assembles into a hexameric ring structure that caps the 20S proteasome core. Strongly interacts with the prokaryotic ubiquitin-like protein Pup through a hydrophobic interface; the interacting region of ARC lies in its N-terminal coiled-coil domain. There is one Pup binding site per ARC hexamer ring. Upon ATP-binding, the C-terminus of ARC interacts with the alpha-rings of the proteasome core, possibly by binding to the intersubunit pockets.

Its pathway is protein degradation; proteasomal Pup-dependent pathway. ATPase which is responsible for recognizing, binding, unfolding and translocation of pupylated proteins into the bacterial 20S proteasome core particle. May be essential for opening the gate of the 20S proteasome via an interaction with its C-terminus, thereby allowing substrate entry and access to the site of proteolysis. Thus, the C-termini of the proteasomal ATPase may function like a 'key in a lock' to induce gate opening and therefore regulate proteolysis. The sequence is that of Proteasome-associated ATPase from Mycobacterium avium (strain 104).